Reading from the N-terminus, the 443-residue chain is GTPase Der (443 aa).

EngA-type G domains follow at residues 3–168 (PLLA…PEAP) and 178–353 (VHLA…RNRS). GTP is bound by residues 9–16 (GRPNVGKS), 56–60 (DTGGY), 120–123 (NKVE), 184–191 (GRPNVGKS), 231–235 (DTAGL), and 296–299 (NKWD). One can recognise a KH-like domain in the interval 354–438 (QNVSTSQLNK…PISLRFLHKN (85 aa)).

This sequence belongs to the TRAFAC class TrmE-Era-EngA-EngB-Septin-like GTPase superfamily. EngA (Der) GTPase family. Associates with the 50S ribosomal subunit.

GTPase that plays an essential role in the late steps of ribosome biogenesis. The sequence is that of GTPase Der from Chlorobium chlorochromatii (strain CaD3).